The following is a 36-amino-acid chain: Potassium channel toxin alpha-KTx 16.1 (36 aa).

3 cysteine pairs are disulfide-bonded: Cys7-Cys28, Cys13-Cys33, and Cys17-Cys35.

This sequence belongs to the short scorpion toxin superfamily. Potassium channel inhibitor family. Alpha-KTx 16 subfamily. As to expression, expressed by the venom gland.

The protein localises to the secreted. Functionally, blocks calcium-activated potassium channels. The polypeptide is Potassium channel toxin alpha-KTx 16.1 (Hottentotta tamulus (Eastern Indian scorpion)).